The following is a 215-amino-acid chain: Cytochrome b6 (215 aa).

The chain crosses the membrane as a helical span at residues 32-52 (IFYCFGGITLTCFLIQVATGF). A heme c-binding site is contributed by C35. Heme b contacts are provided by H86 and H100. The next 3 helical transmembrane spans lie at 90 to 110 (ASMM…TGGF), 116 to 136 (LTWV…VTGY), and 186 to 206 (LHTF…FLMI). Positions 187 and 202 each coordinate heme b.

This sequence belongs to the cytochrome b family. PetB subfamily. As to quaternary structure, the 4 large subunits of the cytochrome b6-f complex are cytochrome b6, subunit IV (17 kDa polypeptide, PetD), cytochrome f and the Rieske protein, while the 4 small subunits are PetG, PetL, PetM and PetN. The complex functions as a dimer. Heme b is required as a cofactor. Heme c serves as cofactor.

It is found in the plastid. Its subcellular location is the chloroplast thylakoid membrane. Functionally, component of the cytochrome b6-f complex, which mediates electron transfer between photosystem II (PSII) and photosystem I (PSI), cyclic electron flow around PSI, and state transitions. This Nephroselmis olivacea (Green alga) protein is Cytochrome b6.